A 253-amino-acid chain; its full sequence is Small ribosomal subunit protein uS2 (253 aa).

The segment at Gln-226–Glu-253 is disordered. A compositionally biased stretch (acidic residues) spans Glu-239–Glu-253.

Belongs to the universal ribosomal protein uS2 family.

The chain is Small ribosomal subunit protein uS2 from Lactobacillus delbrueckii subsp. bulgaricus (strain ATCC 11842 / DSM 20081 / BCRC 10696 / JCM 1002 / NBRC 13953 / NCIMB 11778 / NCTC 12712 / WDCM 00102 / Lb 14).